The chain runs to 213 residues: ATP synthase subunit b 2 (213 aa).

Residues 1 to 45 are disordered; the sequence is MFVTEAYAQSAPTVGETHTETPAVGQPQPEATHTETGVAHGAEHG. Residues 57–76 form a helical membrane-spanning segment; sequence TYASQVLWLAITFGLFYLLM.

It belongs to the ATPase B chain family. As to quaternary structure, F-type ATPases have 2 components, F(1) - the catalytic core - and F(0) - the membrane proton channel. F(1) has five subunits: alpha(3), beta(3), gamma(1), delta(1), epsilon(1). F(0) has three main subunits: a(1), b(2) and c(10-14). The alpha and beta chains form an alternating ring which encloses part of the gamma chain. F(1) is attached to F(0) by a central stalk formed by the gamma and epsilon chains, while a peripheral stalk is formed by the delta and b chains.

It localises to the cell inner membrane. Its function is as follows. F(1)F(0) ATP synthase produces ATP from ADP in the presence of a proton or sodium gradient. F-type ATPases consist of two structural domains, F(1) containing the extramembraneous catalytic core and F(0) containing the membrane proton channel, linked together by a central stalk and a peripheral stalk. During catalysis, ATP synthesis in the catalytic domain of F(1) is coupled via a rotary mechanism of the central stalk subunits to proton translocation. In terms of biological role, component of the F(0) channel, it forms part of the peripheral stalk, linking F(1) to F(0). The b'-subunit is a diverged and duplicated form of b found in plants and photosynthetic bacteria. This is ATP synthase subunit b 2 (atpF2) from Agrobacterium fabrum (strain C58 / ATCC 33970) (Agrobacterium tumefaciens (strain C58)).